Here is a 97-residue protein sequence, read N- to C-terminus: HssA/B-like protein 47 (97 aa).

Residues 1-33 (MTLFSSISSISNPMTSSKSSIASFGSGTSMSSN) are disordered.

This sequence belongs to the hssA/B family.

This is HssA/B-like protein 47 (hssl47) from Dictyostelium discoideum (Social amoeba).